Consider the following 213-residue polypeptide: tRNA (guanine-N(7)-)-methyltransferase (213 aa).

S-adenosyl-L-methionine is bound by residues Asp44, Glu69, Asn96, and Asp119. Asp119 is a catalytic residue. Substrate-binding residues include Lys123 and Asp155.

Belongs to the class I-like SAM-binding methyltransferase superfamily. TrmB family.

It catalyses the reaction guanosine(46) in tRNA + S-adenosyl-L-methionine = N(7)-methylguanosine(46) in tRNA + S-adenosyl-L-homocysteine. Its pathway is tRNA modification; N(7)-methylguanine-tRNA biosynthesis. Functionally, catalyzes the formation of N(7)-methylguanine at position 46 (m7G46) in tRNA. The sequence is that of tRNA (guanine-N(7)-)-methyltransferase from Thermosynechococcus vestitus (strain NIES-2133 / IAM M-273 / BP-1).